A 498-amino-acid polypeptide reads, in one-letter code: Probable FAD-binding monooxygenase AlmA (498 aa).

A helical transmembrane segment spans residues 4–24; sequence HIDILIVGAGISGIGIAAHLS. 5 residues coordinate FAD: S15, E36, D56, F62, and V104. 54 to 56 contributes to the NADP(+) binding site; sequence RSD. NADP(+) is bound by residues 184–190, 208–209, and 292–293; these read SGATAIT, RS, and RL. V395 contributes to the FAD binding site.

It belongs to the FAD-binding monooxygenase family. Requires FAD as cofactor.

The protein resides in the cell membrane. It participates in hydrocarbon metabolism; alkane degradation. Is able to catalyze the degradation of n-alkanes with C chain lengths of 32 and 36. Probably allows Acinetobacter baylyi strain ADP1 to grow on the long-chain n-alkane dotriacontane (C32H66) as a sole carbon source. This chain is Probable FAD-binding monooxygenase AlmA, found in Acinetobacter baylyi (strain ATCC 33305 / BD413 / ADP1).